The following is a 367-amino-acid chain: Porin Omp2a (367 aa).

A signal peptide spans 1–22 (MNIKSLLLGSAAALVAASGAQA).

The protein belongs to the alphaproteobacteria porin family. In terms of assembly, monomer.

Its subcellular location is the cell outer membrane. Forms passive diffusion pores that allow small molecular weight hydrophilic materials across the outer membrane. In Brucella suis, this protein is Porin Omp2a (omp2a).